The sequence spans 100 residues: ESAT-6-like protein EsxB (100 aa).

Residues G80 to I100 form a disordered region.

This sequence belongs to the WXG100 family. CFP-10 subfamily. Forms a tight 1:1 complex with EsxA. An artificial EsxA-EsxB heterodimer interacts with EspA.

The protein resides in the secreted. Its function is as follows. An exported protein. Plays a role in DNA conjugation, in at least a donor strain. The polypeptide is ESAT-6-like protein EsxB (Mycolicibacterium smegmatis (strain ATCC 700084 / mc(2)155) (Mycobacterium smegmatis)).